We begin with the raw amino-acid sequence, 470 residues long: Ribulose bisphosphate carboxylase large chain (470 aa).

Substrate-binding residues include N115 and T165. K167 serves as the catalytic Proton acceptor. Substrate is bound at residue K169. The Mg(2+) site is built by K193, D195, and E196. K193 carries the post-translational modification N6-carboxylysine. H286 acts as the Proton acceptor in catalysis. Positions 287, 319, and 371 each coordinate substrate.

The protein belongs to the RuBisCO large chain family. Type I subfamily. In terms of assembly, heterohexadecamer of 8 large chains and 8 small chains. The cofactor is Mg(2+).

It is found in the carboxysome. It carries out the reaction 2 (2R)-3-phosphoglycerate + 2 H(+) = D-ribulose 1,5-bisphosphate + CO2 + H2O. The enzyme catalyses D-ribulose 1,5-bisphosphate + O2 = 2-phosphoglycolate + (2R)-3-phosphoglycerate + 2 H(+). Functionally, ruBisCO catalyzes two reactions: the carboxylation of D-ribulose 1,5-bisphosphate, the primary event in carbon dioxide fixation, as well as the oxidative fragmentation of the pentose substrate in the photorespiration process. Both reactions occur simultaneously and in competition at the same active site. This is Ribulose bisphosphate carboxylase large chain from Prochlorococcus marinus (strain NATL1A).